Here is a 178-residue protein sequence, read N- to C-terminus: CD209 antigen-like protein C (178 aa).

Residues Cys-48 and Cys-59 are joined by a disulfide bond. The 116-residue stretch at 54–169 folds into the C-type lectin domain; that stretch reads VFQGNCYFFS…CTIKKYWICK (116 aa). Asn-70 carries N-linked (GlcNAc...) asparagine glycosylation. 2 disulfide bridges follow: Cys-76–Cys-168 and Cys-147–Cys-160. Ca(2+) contacts are provided by Glu-138, Asn-140, Glu-145, Asn-156, and Asp-157.

Its function is as follows. Probable pathogen-recognition receptor. May recognize in a calcium-dependent manner high mannose N-linked oligosaccharides in a variety of pathogen antigens. This chain is CD209 antigen-like protein C (Cd209c), found in Mus musculus (Mouse).